We begin with the raw amino-acid sequence, 998 residues long: MEDAYARSVSEVLDFFGVDPTKGLSDSQVVHHSRLYGRNVLPEEKRTPFWKLVLKQFDDLLVKILIVAAIVSFVLALANGETGLTAFLEPFVILLILAANAAVGVITETNAEKALEELRAYQANIATVLRNGCFSILPATELVPGDIVEVTVGCKIPADLRMIEMSSNTFRVDQAILTGESCSVEKDVDCTLTTNAVYQDKKNILFSGTDVVAGRGRAVVIGVGSNTAMGSIHDSMLQTDDEATPLKKKLDEFGSFLAKVIAGICVLVWVVNIGHFSDPSHGGFFKGAIHYFKIAVALAVAAIPEGLPAVVTTCLALGTKKMARLNAIVRSLPSVETLGCTTVICSDKTGTLTTNMMSVSKICVVQSAEHGPMINEFTVSGTTYAPEGTVFDSNGMQLDLPAQSPCLHHLAMCSSLCNDSILQYNPDKDSYEKIGESTEVALRVLAEKVGLPGFDSMPSALNMLSKHERASYCNHYWENQFKKVYVLEFTRDRKMMSVLCSHKQMDVMFSKGAPESIIARCNKILCNGDGSVVPLTAAGRAELESRFYSFGDETLRCLALAFKTVPHGQQTISYDNENDLTFIGLVGMLDPPREEVRDAMLACMTAGIRVIVVTGDNKSTAESLCRKIGAFDNLVDFSGMSYTASEFERLPAVQQTLALRRMTLFSRVEPSHKRMLVEALQKQNEVVAMTGDGVNDAPALKKADIGIAMGSGTAVAKSASDMVLADDNFASIVAAVAEGRAIYNNTKQFIRYMISSNIGEVVCIFVAAVLGIPDTLAPVQLLWVNLVTDGLPATAIGFNKQDSDVMKAKPRKVGEAVVTGWLFFRYLVIGVYVGLATVAGFIWWFVYSDGGPKLTYSELMNFETCALRETTYPCSIFEDRHPSTVAMTVLVVVEMFNALNNLSENQSLLVITPRSNLWLVGSIILTMLLHVLILYVHPLAVLFSVTPLSWAEWTAVLYLSFPVIIIDELLKFLSRNTGMRFRFRLRKADLLPKDRRDK.

The Cytoplasmic segment spans residues 1–48; the sequence is MEDAYARSVSEVLDFFGVDPTKGLSDSQVVHHSRLYGRNVLPEEKRTP. Residues 49 to 69 traverse the membrane as a helical segment; the sequence is FWKLVLKQFDDLLVKILIVAA. Residues 70–89 lie on the Lumenal side of the membrane; it reads IVSFVLALANGETGLTAFLE. The helical transmembrane segment at 90–109 threads the bilayer; that stretch reads PFVILLILAANAAVGVITET. Residues 110-250 are Cytoplasmic-facing; sequence NAEKALEELR…DEATPLKKKL (141 aa). A helical transmembrane segment spans residues 251 to 270; it reads DEFGSFLAKVIAGICVLVWV. Residues 271–291 are Lumenal-facing; sequence VNIGHFSDPSHGGFFKGAIHY. The chain crosses the membrane as a helical span at residues 292-309; sequence FKIAVALAVAAIPEGLPA. Ca(2+)-binding residues include valine 300, alanine 301, isoleucine 303, and glutamate 305. Residues 310–746 lie on the Cytoplasmic side of the membrane; that stretch reads VVTTCLALGT…AEGRAIYNNT (437 aa). The 4-aspartylphosphate intermediate role is filled by aspartate 347. The Mg(2+) site is built by aspartate 692 and aspartate 696. A helical transmembrane segment spans residues 747 to 766; that stretch reads KQFIRYMISSNIGEVVCIFV. Residues asparagine 757 and glutamate 760 each contribute to the Ca(2+) site. Topologically, residues 767–776 are lumenal; the sequence is AAVLGIPDTL. The helical transmembrane segment at 777 to 797 threads the bilayer; it reads APVQLLWVNLVTDGLPATAIG. Residues asparagine 785, threonine 788, and aspartate 789 each coordinate Ca(2+). At 798 to 817 the chain is on the cytoplasmic side; that stretch reads FNKQDSDVMKAKPRKVGEAV. A helical transmembrane segment spans residues 818-840; sequence VTGWLFFRYLVIGVYVGLATVAG. Residues 841–883 are Lumenal-facing; sequence FIWWFVYSDGGPKLTYSELMNFETCALRETTYPCSIFEDRHPS. A helical membrane pass occupies residues 884–903; the sequence is TVAMTVLVVVEMFNALNNLS. Glutamate 894 is a binding site for Ca(2+). Residues 904 to 916 lie on the Cytoplasmic side of the membrane; sequence ENQSLLVITPRSN. The chain crosses the membrane as a helical span at residues 917 to 935; the sequence is LWLVGSIILTMLLHVLILY. At 936–950 the chain is on the lumenal side; the sequence is VHPLAVLFSVTPLSW. A helical transmembrane segment spans residues 951 to 971; the sequence is AEWTAVLYLSFPVIIIDELLK. Residues 972-998 lie on the Cytoplasmic side of the membrane; that stretch reads FLSRNTGMRFRFRLRKADLLPKDRRDK.

This sequence belongs to the cation transport ATPase (P-type) (TC 3.A.3) family. Type IIA subfamily. Expressed in root cap, in elongation and differentiation zones of roots, in vascular tissues of roots, leaves, floral pedicels and style, in leaves, including hydathodes and guard cells, in stamens, in petals, in sepals and in siliques.

It is found in the golgi apparatus membrane. Its subcellular location is the endosome membrane. The protein localises to the prevacuolar compartment membrane. It catalyses the reaction Ca(2+)(in) + ATP + H2O = Ca(2+)(out) + ADP + phosphate + H(+). This magnesium-dependent enzyme catalyzes the hydrolysis of ATP coupled with the translocation of calcium from the cytosol to an endomembrane compartment. Involved in calcium-enhanced root growth, in tolerance to toxic levels of manganese and in secretory processes. Has a crucial role in manganese nutrition, but is not involved in transporting copper, iron or zinc. This chain is Calcium-transporting ATPase 3, endoplasmic reticulum-type, found in Arabidopsis thaliana (Mouse-ear cress).